Consider the following 373-residue polypeptide: Chorismate synthase (373 aa).

Residue R46 coordinates NADP(+). FMN is bound by residues 123 to 125 (RSS), 250 to 251 (NA), G295, 310 to 314 (KPTPS), and R337.

It belongs to the chorismate synthase family. Requires FMNH2 as cofactor.

It carries out the reaction 5-O-(1-carboxyvinyl)-3-phosphoshikimate = chorismate + phosphate. The protein operates within metabolic intermediate biosynthesis; chorismate biosynthesis; chorismate from D-erythrose 4-phosphate and phosphoenolpyruvate: step 7/7. Functionally, catalyzes the anti-1,4-elimination of the C-3 phosphate and the C-6 proR hydrogen from 5-enolpyruvylshikimate-3-phosphate (EPSP) to yield chorismate, which is the branch point compound that serves as the starting substrate for the three terminal pathways of aromatic amino acid biosynthesis. This reaction introduces a second double bond into the aromatic ring system. In Methanococcus aeolicus (strain ATCC BAA-1280 / DSM 17508 / OCM 812 / Nankai-3), this protein is Chorismate synthase.